The following is a 578-amino-acid chain: Triokinase/FMN cyclase (578 aa).

Residues 9 to 336 enclose the DhaK domain; sequence SVEGCADDAL…IDAETTAKAW (328 aa). Dihydroxyacetone-binding positions include 56–59, Lys-109, and Asp-114; that span reads GSGH. His-221 serves as the catalytic Tele-hemiaminal-histidine intermediate. One can recognise a DhaL domain in the interval 372 to 571; the sequence is KQMALVLDRI…AAAIFRAILE (200 aa). ATP contacts are provided by residues 401-404, 446-447, Gly-486, and 494-495; these read DGDC, SS, and TM. A phosphoserine mark is found at Ser-511 and Ser-545. 556–558 is an ATP binding site; that stretch reads DPG.

It belongs to the dihydroxyacetone kinase (DAK) family. Homodimer. Interacts with IFIH1 (via the CARD domains), the interaction is inhibited by viral infection. It depends on Mg(2+) as a cofactor. Requires Mn(2+) as cofactor. Co(2+) serves as cofactor.

The catalysed reaction is dihydroxyacetone + ATP = dihydroxyacetone phosphate + ADP + H(+). It carries out the reaction D-glyceraldehyde + ATP = D-glyceraldehyde 3-phosphate + ADP + H(+). It catalyses the reaction FAD = riboflavin cyclic-4',5'-phosphate + AMP + H(+). Its activity is regulated as follows. Each activity is inhibited by the substrate(s) of the other. Catalyzes both the phosphorylation of dihydroxyacetone and of glyceraldehyde, and the splitting of ribonucleoside diphosphate-X compounds among which FAD is the best substrate. Represses IFIH1-mediated cellular antiviral response. This chain is Triokinase/FMN cyclase, found in Mus musculus (Mouse).